We begin with the raw amino-acid sequence, 196 residues long: MADS-box protein FLOWERING LOCUS C (196 aa).

The MADS-box domain maps to 1–61 (MGRKKLEIKR…GKLYSFSSGD (61 aa)). The short motif at 8–15 (IKRIENKS) is the Nuclear localization signal element. Residues 80–170 (ALDHQSKALN…ASQMENNHHV (91 aa)) enclose the K-box domain.

As to expression, high expression in the vegetative apex and in root tissue and lower expression in leaves and stems. Not detected in young tissues of the inflorescence. Before fertilization, expressed in ovules, but not in pollen or stamens, of non-vernalized plants. After vernalization, not detected in ovules.

It is found in the nucleus. Functionally, putative transcription factor that seems to play a central role in the regulation of flowering time in the late-flowering phenotype by interacting with 'FRIGIDA', the autonomous and the vernalization flowering pathways. Inhibits flowering by repressing 'SUPPRESSOR OF OVEREXPRESSION OF CONSTANS 1'. At elevated temperatures (e.g. 29 degrees Celsius), maintained at high levels in a JMJ30/JMJ32-dependent manner to prevent extreme precocious flowering. The protein is MADS-box protein FLOWERING LOCUS C of Arabidopsis thaliana (Mouse-ear cress).